A 187-amino-acid chain; its full sequence is UPF0301 protein Sbal195_3177 (187 aa).

It belongs to the UPF0301 (AlgH) family.

In Shewanella baltica (strain OS195), this protein is UPF0301 protein Sbal195_3177.